Here is a 306-residue protein sequence, read N- to C-terminus: Palmitoyl-protein thioesterase ABHD10, mitochondrial (306 aa).

Residues 1-52 (MAVARLAAVAAWVPCRSWGWAAVPFGPHRGLSVLLARIPQRAPRWLPACRQK) constitute a mitochondrion transit peptide. The 101-residue stretch at 78–178 (IIFIPGYLSY…VVALIGVATA (101 aa)) folds into the AB hydrolase-1 domain. Active-site charge relay system residues include Ser-152, Asp-249, and His-279.

It belongs to the AB hydrolase superfamily.

The protein localises to the mitochondrion. The enzyme catalyses S-hexadecanoyl-L-cysteinyl-[protein] + H2O = L-cysteinyl-[protein] + hexadecanoate + H(+). The catalysed reaction is mycophenolic acid O-acyl-beta-D-glucuronide + H2O = mycophenolate + D-glucuronate + H(+). Its activity is regulated as follows. Inhibited by palmostatin-B. Acts as an acyl-protein thioesterase that hydrolyzes fatty acids from acylated residues in proteins. Regulates the mitochondrial S-depalmitoylation of the nucleophilic active site residue of peroxiredoxin-5/PRDX5, a key antioxidant protein, therefore modulating mitochondrial antioxidant ability. Also catalyzes the deglucuronidation of mycophenolic acid acyl-glucuronide, an active metabolite of the immunosuppressant drug mycophenolate. This Homo sapiens (Human) protein is Palmitoyl-protein thioesterase ABHD10, mitochondrial.